A 373-amino-acid chain; its full sequence is UDP-N-acetylglucosamine--N-acetylmuramyl-(pentapeptide) pyrophosphoryl-undecaprenol N-acetylglucosamine transferase (373 aa).

Residues 15 to 17 (TGG), Asn-126, Arg-170, Ser-198, and Gln-300 contribute to the UDP-N-acetyl-alpha-D-glucosamine site.

It belongs to the glycosyltransferase 28 family. MurG subfamily.

It is found in the cell inner membrane. It catalyses the reaction di-trans,octa-cis-undecaprenyl diphospho-N-acetyl-alpha-D-muramoyl-L-alanyl-D-glutamyl-meso-2,6-diaminopimeloyl-D-alanyl-D-alanine + UDP-N-acetyl-alpha-D-glucosamine = di-trans,octa-cis-undecaprenyl diphospho-[N-acetyl-alpha-D-glucosaminyl-(1-&gt;4)]-N-acetyl-alpha-D-muramoyl-L-alanyl-D-glutamyl-meso-2,6-diaminopimeloyl-D-alanyl-D-alanine + UDP + H(+). The protein operates within cell wall biogenesis; peptidoglycan biosynthesis. Cell wall formation. Catalyzes the transfer of a GlcNAc subunit on undecaprenyl-pyrophosphoryl-MurNAc-pentapeptide (lipid intermediate I) to form undecaprenyl-pyrophosphoryl-MurNAc-(pentapeptide)GlcNAc (lipid intermediate II). This Methylobacterium nodulans (strain LMG 21967 / CNCM I-2342 / ORS 2060) protein is UDP-N-acetylglucosamine--N-acetylmuramyl-(pentapeptide) pyrophosphoryl-undecaprenol N-acetylglucosamine transferase.